A 1054-amino-acid polypeptide reads, in one-letter code: Disks large-associated protein 2 (1054 aa).

2 disordered regions span residues 32–87 (EPEE…SGSR) and 242–301 (SHSL…SDDN). Polar residues predominate over residues 242–255 (SHSLEGSSKSNANG). The span at 267-281 (HAHHAKHSKRSKSKE) shows a compositional bias: basic residues. The segment covering 289 to 299 (RPGMSSWWSSD) has biased composition (low complexity). Phosphoserine occurs at positions 298, 304, 386, and 452. Disordered stretches follow at residues 442 to 464 (GDEESGESDSSPKTSPKSAILPE) and 609 to 666 (YKKT…TDSL). The segment covering 628–641 (VTAQSSTESTQDAY) has biased composition (polar residues). Phosphoserine occurs at positions 662, 665, 668, and 715. Residues 719-746 (QDSEFPEHQPYPRSDVETATDSDTESRG) form a disordered region. Residue T738 is modified to Phosphothreonine. 5 positions are modified to phosphoserine: S740, S771, S806, S978, and S1007. Basic and acidic residues-rich tracts occupy residues 977 to 987 (ESPERKEERKV) and 1002 to 1020 (ITREKSLDLPDRQRQEARR). The segment at 977–1021 (ESPERKEERKVPPPIPKKPPKGKFPITREKSLDLPDRQRQEARRR) is disordered.

This sequence belongs to the SAPAP family. Interacts with DLG1 and DLG4/PSD-95. Expressed in brain and kidney.

It localises to the cell membrane. Its subcellular location is the postsynaptic density. The protein localises to the synapse. In terms of biological role, may play a role in the molecular organization of synapses and neuronal cell signaling. Could be an adapter protein linking ion channel to the subsynaptic cytoskeleton. May induce enrichment of PSD-95/SAP90 at the plasma membrane. The chain is Disks large-associated protein 2 from Homo sapiens (Human).